The chain runs to 469 residues: Asparagine--tRNA ligase (469 aa).

The protein belongs to the class-II aminoacyl-tRNA synthetase family. As to quaternary structure, homodimer.

It is found in the cytoplasm. The enzyme catalyses tRNA(Asn) + L-asparagine + ATP = L-asparaginyl-tRNA(Asn) + AMP + diphosphate + H(+). The chain is Asparagine--tRNA ligase from Porphyromonas gingivalis (strain ATCC 33277 / DSM 20709 / CIP 103683 / JCM 12257 / NCTC 11834 / 2561).